A 267-amino-acid chain; its full sequence is NAD(P)H-hydrate epimerase (267 aa).

Positions 27–242 (AQKIDEDLMS…DLEAKFDLQL (216 aa)) constitute a YjeF N-terminal domain. 78 to 82 (NQGGD) contributes to the (6S)-NADPHX binding site. Residues Gln-79 and Asp-142 each coordinate K(+). Residues 146–152 (GFNFKGD) and Asp-185 contribute to the (6S)-NADPHX site. Position 188 (Ser-188) interacts with K(+).

It belongs to the NnrE/AIBP family. K(+) serves as cofactor.

It localises to the cytoplasm. Its subcellular location is the mitochondrion. It carries out the reaction (6R)-NADHX = (6S)-NADHX. It catalyses the reaction (6R)-NADPHX = (6S)-NADPHX. Catalyzes the epimerization of the S- and R-forms of NAD(P)HX, a damaged form of NAD(P)H that is a result of enzymatic or heat-dependent hydration. This is a prerequisite for the S-specific NAD(P)H-hydrate dehydratase to allow the repair of both epimers of NAD(P)HX. The chain is NAD(P)H-hydrate epimerase from Mycosarcoma maydis (Corn smut fungus).